A 121-amino-acid polypeptide reads, in one-letter code: Small ribosomal subunit protein uS13 (121 aa).

The disordered stretch occupies residues 99–121 (RGQRTRTNSRTRKGPRRKIMKKK). Residues 101–121 (QRTRTNSRTRKGPRRKIMKKK) are compositionally biased toward basic residues.

It belongs to the universal ribosomal protein uS13 family. Part of the 30S ribosomal subunit. Forms a loose heterodimer with protein S19. Forms two bridges to the 50S subunit in the 70S ribosome.

Functionally, located at the top of the head of the 30S subunit, it contacts several helices of the 16S rRNA. In the 70S ribosome it contacts the 23S rRNA (bridge B1a) and protein L5 of the 50S subunit (bridge B1b), connecting the 2 subunits; these bridges are implicated in subunit movement. Contacts the tRNAs in the A and P-sites. The chain is Small ribosomal subunit protein uS13 from Thermodesulfovibrio yellowstonii (strain ATCC 51303 / DSM 11347 / YP87).